Reading from the N-terminus, the 110-residue chain is Ribonuclease P protein component 4 (110 aa).

Positions 65, 68, 94, and 97 each coordinate Zn(2+).

Belongs to the eukaryotic/archaeal RNase P protein component 4 family. In terms of assembly, consists of a catalytic RNA component and at least 4-5 protein subunits. Requires Zn(2+) as cofactor.

The protein resides in the cytoplasm. It catalyses the reaction Endonucleolytic cleavage of RNA, removing 5'-extranucleotides from tRNA precursor.. Its function is as follows. Part of ribonuclease P, a protein complex that generates mature tRNA molecules by cleaving their 5'-ends. The polypeptide is Ribonuclease P protein component 4 (Methanococcus maripaludis (strain C5 / ATCC BAA-1333)).